The primary structure comprises 217 residues: Proteasome subunit beta type-6-B like protein (217 aa).

A propeptide spans 1–16 (MERHFMDSQIKGVSTG) (removed in mature form). The Nucleophile role is filled by Thr-17.

It belongs to the peptidase T1B family. In terms of assembly, the 26S proteasome consists of a 20S proteasome core and two 19S regulatory subunits. The 20S proteasome core is composed of 28 subunits that are arranged in four stacked rings, resulting in a barrel-shaped structure. The two end rings are each formed by seven alpha subunits, and the two central rings are each formed by seven beta subunits. The catalytic chamber with the active sites is on the inside of the barrel.

The protein resides in the cytoplasm. Its subcellular location is the nucleus. It catalyses the reaction Cleavage of peptide bonds with very broad specificity.. In terms of biological role, the proteasome is a multicatalytic proteinase complex which is characterized by its ability to cleave peptides with Arg, Phe, Tyr, Leu, and Glu adjacent to the leaving group at neutral or slightly basic pH. The proteasome has an ATP-dependent proteolytic activity. This subunit is involved in antigen processing to generate class I binding peptides. The protein is Proteasome subunit beta type-6-B like protein (psmb6l-b) of Salmo salar (Atlantic salmon).